A 504-amino-acid polypeptide reads, in one-letter code: Chorion-specific transcription factor GCMb (504 aa).

A DNA-binding region (GCM) is located at residues 19 to 174; the sequence is LTWDINDPQM…KSETEGRRSA (156 aa). Residues Cys81, Cys87, Cys91, Cys118, Cys121, Cys130, His157, and His159 each coordinate Zn(2+). 2 stretches are compositionally biased toward basic and acidic residues: residues 155-172 and 188-203; these read GVHDHPRPESKSETEGRR and RRSEEPEARSTQDIRG. The disordered stretch occupies residues 155-203; the sequence is GVHDHPRPESKSETEGRRSALKRQMASFYQPQKRRSEEPEARSTQDIRG. The segment at 379–393 is C-terminal conserved inhibitory domain (CCID); sequence LQTVITTTVAYQAYQ. The segment at 438–472 is disordered; that stretch reads ASPSGRAPLKVPGDCQAPRPTLDFPQEADPSGTDG.

Its subcellular location is the nucleus. Functionally, transcription factor that binds specific sequences on gene promoters and activate their transcription. Through the regulation of gene transcription, may play a role in parathyroid gland development. The sequence is that of Chorion-specific transcription factor GCMb from Mus musculus (Mouse).